The following is a 280-amino-acid chain: MAEPLAVDPTGLSAAAAKLAGLVFPQPPAPIAVSGTDSVVAAINETMPSIESLVSDGLPGVKAALTRTASNMNAAADVYAKTDQSLGTSLSQYAFGSSGEGLAGVASVGGQPSQATQLLSTPVSQVTTQLGETAAELAPRVVAKVPQLVQLAPHAVQMSQNASPIAQTISQTAQQAAQSAQGGSGPMPAQLASAEKPATEQAEPVHEVTNDDQGDQGDVQPAEVVAAARDEGAGASPGQQPGGGVPAQAMDTGAGARPAASPLAAPVDPSTPAPSTTTTL.

Ser-70 is modified (phosphoserine). Composition is skewed to low complexity over residues Gln-167–Gln-181 and Pro-246–Leu-280. The interval Gln-167–Leu-280 is disordered.

Phosphorylated at Ser-70.

The protein resides in the secreted. Could be involved in regulation of growth and intracellular survival. The sequence is that of ESX-1 secretion-associated protein EspJ from Mycobacterium tuberculosis (strain CDC 1551 / Oshkosh).